The chain runs to 98 residues: MMSISLNLTMAFLLALAGVLIYRSHLMSTLLCLEGMMLSLFILMALLISHFHMFSASMAPLILLVFSACEAGVGLALLVKTSNNYGNDYVQNLNLLQC.

3 consecutive transmembrane segments (helical) span residues 1 to 21 (MMSI…GVLI), 28 to 48 (STLL…ALLI), and 59 to 79 (APLI…ALLV).

It belongs to the complex I subunit 4L family. As to quaternary structure, core subunit of respiratory chain NADH dehydrogenase (Complex I) which is composed of 45 different subunits.

The protein resides in the mitochondrion inner membrane. The catalysed reaction is a ubiquinone + NADH + 5 H(+)(in) = a ubiquinol + NAD(+) + 4 H(+)(out). Core subunit of the mitochondrial membrane respiratory chain NADH dehydrogenase (Complex I) which catalyzes electron transfer from NADH through the respiratory chain, using ubiquinone as an electron acceptor. Part of the enzyme membrane arm which is embedded in the lipid bilayer and involved in proton translocation. This Osphranter robustus (Wallaroo) protein is NADH-ubiquinone oxidoreductase chain 4L (MT-ND4L).